Here is a 463-residue protein sequence, read N- to C-terminus: Siroheme synthase (463 aa).

A precorrin-2 dehydrogenase /sirohydrochlorin ferrochelatase region spans residues 1–203; the sequence is MDYLPLFHKL…GQGAEAERLL (203 aa). Residues 22–23 and 43–44 each bind NAD(+); these read EI and PE. At Ser128 the chain carries Phosphoserine. The uroporphyrinogen-III C-methyltransferase stretch occupies residues 216 to 463; that stretch reads GEVYLVGAGP…LAWFEGAQNS (248 aa). Position 225 (Pro225) interacts with S-adenosyl-L-methionine. The active-site Proton acceptor is Asp248. The Proton donor role is filled by Lys270. S-adenosyl-L-methionine-binding positions include 301 to 303, Ile306, 331 to 332, Met383, and Gly412; these read GGD and TA.

It in the N-terminal section; belongs to the precorrin-2 dehydrogenase / sirohydrochlorin ferrochelatase family. This sequence in the C-terminal section; belongs to the precorrin methyltransferase family.

The catalysed reaction is uroporphyrinogen III + 2 S-adenosyl-L-methionine = precorrin-2 + 2 S-adenosyl-L-homocysteine + H(+). The enzyme catalyses precorrin-2 + NAD(+) = sirohydrochlorin + NADH + 2 H(+). It carries out the reaction siroheme + 2 H(+) = sirohydrochlorin + Fe(2+). It participates in cofactor biosynthesis; adenosylcobalamin biosynthesis; precorrin-2 from uroporphyrinogen III: step 1/1. Its pathway is cofactor biosynthesis; adenosylcobalamin biosynthesis; sirohydrochlorin from precorrin-2: step 1/1. The protein operates within porphyrin-containing compound metabolism; siroheme biosynthesis; precorrin-2 from uroporphyrinogen III: step 1/1. It functions in the pathway porphyrin-containing compound metabolism; siroheme biosynthesis; siroheme from sirohydrochlorin: step 1/1. It participates in porphyrin-containing compound metabolism; siroheme biosynthesis; sirohydrochlorin from precorrin-2: step 1/1. Its function is as follows. Multifunctional enzyme that catalyzes the SAM-dependent methylations of uroporphyrinogen III at position C-2 and C-7 to form precorrin-2 via precorrin-1. Then it catalyzes the NAD-dependent ring dehydrogenation of precorrin-2 to yield sirohydrochlorin. Finally, it catalyzes the ferrochelation of sirohydrochlorin to yield siroheme. The chain is Siroheme synthase from Pseudomonas entomophila (strain L48).